Reading from the N-terminus, the 108-residue chain is Integration host factor subunit alpha (108 aa).

This sequence belongs to the bacterial histone-like protein family. As to quaternary structure, heterodimer of an alpha and a beta chain.

In terms of biological role, this protein is one of the two subunits of integration host factor, a specific DNA-binding protein that functions in genetic recombination as well as in transcriptional and translational control. In Rhodopseudomonas palustris (strain BisB18), this protein is Integration host factor subunit alpha.